A 455-amino-acid polypeptide reads, in one-letter code: Cysteinylglycine-S-conjugate dipeptidase (455 aa).

His-92 is a binding site for Zn(2+). Residue Asp-94 is part of the active site. Position 125 (Asp-125) interacts with Zn(2+). The active-site Proton acceptor is the Glu-158. Positions 159, 163, and 428 each coordinate Zn(2+).

This sequence belongs to the peptidase M20F family. Requires Zn(2+) as cofactor.

It carries out the reaction an S-substituted L-cysteinylglycine + H2O = an S-substituted L-cysteine + glycine. The catalysed reaction is S-(1-hydroxy-3-methylhexan-3-yl)-L-cysteinylglycine + H2O = S-(1-hydroxy-3-methylhexan-3-yl)-L-cysteine + glycine. It catalyses the reaction S-benzyl-L-cysteinylglycine + H2O = S-benzyl-L-cysteine + glycine. Metallopeptidase that hydrolyzes the Cys-Gly bond of Cys-Gly-S-conjugates. Involved in the formation of the human body odorant 3-methyl-3-sulfanylhexan-1-ol (3M3SH) from odorless axilla secretions. Catalyzes the hydrolysis of the Cys-Gly bond of the Cys-Gly-S-conjugate of 3M3SH, a key precursor secreted by apocrine glands in human axilla skin. The Cys-S-conjugate obtained is then cleaved by the Cys-S-conjugate beta-lyase MetC, which finally releases 3M3SH. This is Cysteinylglycine-S-conjugate dipeptidase from Corynebacterium striatum.